Reading from the N-terminus, the 153-residue chain is Large ribosomal subunit protein uL13 (153 aa).

It belongs to the universal ribosomal protein uL13 family. Part of the 50S ribosomal subunit.

This protein is one of the early assembly proteins of the 50S ribosomal subunit, although it is not seen to bind rRNA by itself. It is important during the early stages of 50S assembly. The chain is Large ribosomal subunit protein uL13 from Methylobacterium nodulans (strain LMG 21967 / CNCM I-2342 / ORS 2060).